The following is a 185-amino-acid chain: MSKNKGFSETSAGRYSLALYELAVEANNLNEIEVHSASIINLITSSEDFKSLIKDPTNNKEDQLNALSKISEQYKLNELLTKFLSFLISKRRFFYVDKILKSFVETCSVKRGELKAELTSAKDLTENEINNIKEELTKNFSSKIKLNYKHDASLIGGLIVQVGSTMVDTSIKNKLQQIENRMIEA.

This sequence belongs to the ATPase delta chain family. As to quaternary structure, F-type ATPases have 2 components, F(1) - the catalytic core - and F(0) - the membrane proton channel. F(1) has five subunits: alpha(3), beta(3), gamma(1), delta(1), epsilon(1). F(0) has three main subunits: a(1), b(2) and c(10-14). The alpha and beta chains form an alternating ring which encloses part of the gamma chain. F(1) is attached to F(0) by a central stalk formed by the gamma and epsilon chains, while a peripheral stalk is formed by the delta and b chains.

The protein resides in the cell inner membrane. Its function is as follows. F(1)F(0) ATP synthase produces ATP from ADP in the presence of a proton or sodium gradient. F-type ATPases consist of two structural domains, F(1) containing the extramembraneous catalytic core and F(0) containing the membrane proton channel, linked together by a central stalk and a peripheral stalk. During catalysis, ATP synthesis in the catalytic domain of F(1) is coupled via a rotary mechanism of the central stalk subunits to proton translocation. This protein is part of the stalk that links CF(0) to CF(1). It either transmits conformational changes from CF(0) to CF(1) or is implicated in proton conduction. This Pelagibacter ubique (strain HTCC1062) protein is ATP synthase subunit delta.